The sequence spans 557 residues: Nucleolin 1 (557 aa).

Disordered regions lie at residues 1-297 (MGKS…GGSK), 376-398 (GERG…GDGG), and 474-557 (LVVD…FGDE). Residues 49 to 63 (QKEKAVKKVPKKVES) show a composition bias toward basic and acidic residues. 3 stretches are compositionally biased toward acidic residues: residues 64-74 (SDDSDSESEEE), 91-101 (ESSDDSSSDDE), and 124-135 (SSSDDDSSDEEV). Residues 174–184 (AKIAKPAAKDS) are compositionally biased toward low complexity. Over residues 186-197 (SSDDDSDEDSED) the composition is skewed to acidic residues. Residues 203 to 217 (KKAAPAAAKAASSSD) are compositionally biased toward low complexity. Residues 218–229 (SSDEDSDEESED) are compositionally biased toward acidic residues. Residues 230–247 (EKPAQKKADTKASKKSSS) show a composition bias toward basic and acidic residues. A compositionally biased stretch (acidic residues) spans 249 to 263 (ESSESEEDESEDEEE). A compositionally biased stretch (basic and acidic residues) spans 264–281 (TPKKKSSDVEMVDAEKSS). The RRM 1 domain maps to 297 to 374 (KTLFAANLSF…REIRLDIAQE (78 aa)). The 81-residue stretch at 401–481 (KKIFVKGFDA…FYLVVDEPRP (81 aa)) folds into the RRM 2 domain. A compositionally biased stretch (gly residues) spans 485 to 503 (SSGGGGFGRGNGRFGSGGG).

As to quaternary structure, interacts with THAL in the nucleus. Expressed in roots, leaves, shoots and flowers.

It localises to the nucleus. The protein localises to the nucleolus. Involved in pre-rRNA processing and ribosome assembly. Is associated with intranucleolar chromatin and pre-ribosomal particles and plays a role in controlling activation and repression of a specific subset of rRNA genes located in distinctive nucleolar organizer regions. Binds specifically rDNA chromatin and may be required to maintain rDNA chromatin structure, but is probably not required for the overall histone methylation status of 45S rRNA genes. Involved in leaf polarity establishment by functioning cooperatively with AS1 to repress abaxial genes ARF3, ARF4, KAN1, KAN2, YAB1 and YAB5, and the knox homeobox genes KNAT1, KNAT2, KNAT6, and STM to promote adaxial development in leaf primordia at shoot apical meristems at high temperatures. The protein is Nucleolin 1 of Arabidopsis thaliana (Mouse-ear cress).